The primary structure comprises 72 residues: UPF0154 protein BPUM_1692 (72 aa).

Residues 4-24 (WVVILVGVVALLAGVALGFFI) traverse the membrane as a helical segment.

This sequence belongs to the UPF0154 family.

The protein localises to the cell membrane. The chain is UPF0154 protein BPUM_1692 from Bacillus pumilus (strain SAFR-032).